Reading from the N-terminus, the 135-residue chain is uncharacterized protein (135 aa).

This is an uncharacterized protein from Commelina yellow mottle virus (CoYMV).